We begin with the raw amino-acid sequence, 206 residues long: Small ribosomal subunit protein uS4 (206 aa).

Residues 96–156 (NRLDNVTYRI…KNSKLQSRIK (61 aa)) enclose the S4 RNA-binding domain.

Belongs to the universal ribosomal protein uS4 family. As to quaternary structure, part of the 30S ribosomal subunit. Contacts protein S5. The interaction surface between S4 and S5 is involved in control of translational fidelity.

Its function is as follows. One of the primary rRNA binding proteins, it binds directly to 16S rRNA where it nucleates assembly of the body of the 30S subunit. With S5 and S12 plays an important role in translational accuracy. The chain is Small ribosomal subunit protein uS4 from Buchnera aphidicola subsp. Baizongia pistaciae (strain Bp).